Reading from the N-terminus, the 415-residue chain is Serine hydroxymethyltransferase 1 (415 aa).

Residues L122 and 126–128 each bind (6S)-5,6,7,8-tetrahydrofolate; that span reads GHL. At K230 the chain carries N6-(pyridoxal phosphate)lysine.

It belongs to the SHMT family. In terms of assembly, homodimer. Requires pyridoxal 5'-phosphate as cofactor.

It localises to the cytoplasm. The enzyme catalyses (6R)-5,10-methylene-5,6,7,8-tetrahydrofolate + glycine + H2O = (6S)-5,6,7,8-tetrahydrofolate + L-serine. The protein operates within one-carbon metabolism; tetrahydrofolate interconversion. It participates in amino-acid biosynthesis; glycine biosynthesis; glycine from L-serine: step 1/1. Functionally, catalyzes the reversible interconversion of serine and glycine with tetrahydrofolate (THF) serving as the one-carbon carrier. This reaction serves as the major source of one-carbon groups required for the biosynthesis of purines, thymidylate, methionine, and other important biomolecules. Also exhibits THF-independent aldolase activity toward beta-hydroxyamino acids, producing glycine and aldehydes, via a retro-aldol mechanism. The sequence is that of Serine hydroxymethyltransferase 1 from Cupriavidus pinatubonensis (strain JMP 134 / LMG 1197) (Cupriavidus necator (strain JMP 134)).